Reading from the N-terminus, the 372-residue chain is NAD(P)H-quinone oxidoreductase subunit 1 (372 aa).

8 helical membrane-spanning segments follow: residues 27 to 47 (LLWL…GVLV), 97 to 117 (LLFT…WLII), 128 to 148 (VGIG…GLLM), 176 to 196 (LALA…IDIV), 204 to 224 (FLSW…ICAL), 270 to 290 (LLVS…ELIA), 308 to 328 (SLGI…AILL), and 351 to 371 (ISLV…FAFG).

This sequence belongs to the complex I subunit 1 family. In terms of assembly, NDH-1 is composed of at least 11 different subunits.

The protein resides in the cellular thylakoid membrane. It catalyses the reaction a plastoquinone + NADH + (n+1) H(+)(in) = a plastoquinol + NAD(+) + n H(+)(out). It carries out the reaction a plastoquinone + NADPH + (n+1) H(+)(in) = a plastoquinol + NADP(+) + n H(+)(out). NDH-1 shuttles electrons from an unknown electron donor, via FMN and iron-sulfur (Fe-S) centers, to quinones in the respiratory and/or the photosynthetic chain. The immediate electron acceptor for the enzyme in this species is believed to be plastoquinone. Couples the redox reaction to proton translocation, and thus conserves the redox energy in a proton gradient. This Prochlorococcus marinus (strain SARG / CCMP1375 / SS120) protein is NAD(P)H-quinone oxidoreductase subunit 1.